The following is a 352-amino-acid chain: Ion-translocating oxidoreductase complex subunit D (352 aa).

5 consecutive transmembrane segments (helical) span residues 20-40, 42-62, 78-109, 123-143, and 148-168; these read IMLLVLLAAVPGIAAQLWFFG, GTLVQILLASVSALLAEALVL, ALLTGLLLAVSIPPLAPWWMVVLGTVFAVIIA, PAMIGYVVLLISFPVQMTSWL, and IAVNIPGFIDAIQVIFSGHTA. An FMN phosphoryl threonine modification is found at T187. The next 5 helical transmembrane spans lie at 214–234, 242–262, 267–287, 301–321, and 322–342; these read ILAGAGWQWVNLAWLAGGVWL, WHIPLSFLVTLALCAMLGWLF, LAAPQIHLLSGATMLGAFFIL, LIFGALAGLLVWLIRSFGGYP, and DGVAFAVLLANITVPLIDYYT.

Belongs to the NqrB/RnfD family. The complex is composed of six subunits: RsxA, RsxB, RsxC, RsxD, RsxE and RsxG. The cofactor is FMN.

Its subcellular location is the cell inner membrane. Functionally, part of a membrane-bound complex that couples electron transfer with translocation of ions across the membrane. Required to maintain the reduced state of SoxR. Probably transfers electron from NAD(P)H to SoxR. The sequence is that of Ion-translocating oxidoreductase complex subunit D from Escherichia coli (strain K12).